The sequence spans 603 residues: Phosphoribosylformylglycinamidine synthase subunit PurL (603 aa).

His32 is an active-site residue. Positions 35 and 68 each coordinate ATP. Glu70 provides a ligand contact to Mg(2+). Substrate contacts are provided by residues 71–74 (SHNH) and Arg93. The active-site Proton acceptor is His72. Asp94 serves as a coordination point for Mg(2+). ATP contacts are provided by residues Asp107 and 136–139 (GELR). Substrate contacts are provided by Gly189 and Gln208. Residue Asp236 participates in Mg(2+) binding. Position 280 to 282 (280 to 282 (ESQ)) interacts with substrate. Residues Gly388, Lys429, Asn442, and Gly477 each coordinate ATP. Asn478 contributes to the Mg(2+) binding site. Substrate is bound at residue Ser480. ATP is bound by residues Ser549 and His556.

Belongs to the FGAMS family. Monomer. Part of the FGAM synthase complex composed of 1 PurL, 1 PurQ and 2 PurS subunits.

It localises to the cytoplasm. It catalyses the reaction N(2)-formyl-N(1)-(5-phospho-beta-D-ribosyl)glycinamide + L-glutamine + ATP + H2O = 2-formamido-N(1)-(5-O-phospho-beta-D-ribosyl)acetamidine + L-glutamate + ADP + phosphate + H(+). The protein operates within purine metabolism; IMP biosynthesis via de novo pathway; 5-amino-1-(5-phospho-D-ribosyl)imidazole from N(2)-formyl-N(1)-(5-phospho-D-ribosyl)glycinamide: step 1/2. Its function is as follows. Part of the phosphoribosylformylglycinamidine synthase complex involved in the purines biosynthetic pathway. Catalyzes the ATP-dependent conversion of formylglycinamide ribonucleotide (FGAR) and glutamine to yield formylglycinamidine ribonucleotide (FGAM) and glutamate. The FGAM synthase complex is composed of three subunits. PurQ produces an ammonia molecule by converting glutamine to glutamate. PurL transfers the ammonia molecule to FGAR to form FGAM in an ATP-dependent manner. PurS interacts with PurQ and PurL and is thought to assist in the transfer of the ammonia molecule from PurQ to PurL. The chain is Phosphoribosylformylglycinamidine synthase subunit PurL from Thermotoga maritima (strain ATCC 43589 / DSM 3109 / JCM 10099 / NBRC 100826 / MSB8).